Consider the following 510-residue polypeptide: Major facilitator superfamily domain-containing protein 8 (510 aa).

Over 1-38 (MASIDDDDDERTPLLQDSHIGELVETQKQLKSRWWSIR) the chain is Cytoplasmic. A Dileucine internalization motif motif is present at residues 14 to 15 (LL). Residues 39-59 (VMYLTMFLSSVGFSIVMTSIW) form a helical membrane-spanning segment. Residues 60 to 72 (PYLQKVDQSADAS) are Extracellular-facing. A helical transmembrane segment spans residues 73–93 (FLGWVIASFSLGQMVASPLFG). At 94 to 103 (LWSNHRPRRE) the chain is on the cytoplasmic side. Residues 104–124 (PLVVSITILVAASCLYAYVHV) form a helical membrane-spanning segment. At 125–132 (PASHNKYY) the chain is on the extracellular side. The helical transmembrane segment at 133–155 (MLLARTFVGFGSGNVAVVRSYVA) threads the bilayer. Over 156 to 171 (GATSLSERTGAMANIS) the chain is Cytoplasmic. The chain crosses the membrane as a helical span at residues 172-192 (AFQAMGFILGPAFQAALSVIG). At 193–209 (ETGITINGISLQVNMYT) the chain is on the extracellular side. The helical transmembrane segment at 210–230 (APALMGALLGIGNIILIFAIF) threads the bilayer. The Cytoplasmic portion of the chain corresponds to 231–264 (REHRVDDLEKNVSSINSESEVTDVEKANEGPIDQ). The helical transmembrane segment at 265–285 (IAVISSNILFFVVLFVFAIFE) threads the bilayer. At 286-302 (TISTPLTMDMYAWTRTQ) the chain is on the extracellular side. The helical transmembrane segment at 303–323 (AVFYNGIILAAVGVESVIVFL) threads the bilayer. Over 324–335 (TVKILCKKTGER) the chain is Cytoplasmic. The chain crosses the membrane as a helical span at residues 336-356 (VLLLGGLAVIWIGFFILLPWG). The Extracellular segment spans residues 357-406 (NQMPKIQWTDLQNATIHNTTQWTSSIPSSGNHSVEPTGCPVIQTWCLYTP). N369 and N374 each carry an N-linked (GlcNAc...) asparagine glycan. The helical transmembrane segment at 407–427 (VIHLAQYLTSDILIGVGYPIC) threads the bilayer. The Cytoplasmic segment spans residues 428–445 (NVMSYTLYSKIIGPKPQG). A helical membrane pass occupies residues 446–466 (LYMGWLTAAGSAARTLGPVFV). At 467-476 (SQIYTHLGTR) the chain is on the extracellular side. The chain crosses the membrane as a helical span at residues 477–497 (WTFGIICAFVALSLLHLTAVY). Residues 498-510 (KRLIPFSTRYERL) are Cytoplasmic-facing.

It belongs to the major facilitator superfamily.

Its subcellular location is the lysosome membrane. In terms of biological role, may be a carrier that transport small solutes by using chemiosmotic ion gradients. This is Major facilitator superfamily domain-containing protein 8 (mfsd8) from Xenopus laevis (African clawed frog).